We begin with the raw amino-acid sequence, 622 residues long: MSDVSADGGFLSAEQATTPVAIPTPYPSLTVSASYKEKSSGRRRPVRPSFDAAADNEFITLLHGSDPVKVELNRLENEVRDKDRELSEANAEIKALRLSERQREKACEELTDELAKLDGKLKLTESLLQSKNLEIKKINEEKKASMAAQFAAEATLRRVHAAQKDDDMPPIEAILAPLEAELKLARSEIGKLQEDNRALDRLTKSKEAALLDAERTVETALAKAALVDDLQNKNQELMKQIEICQEENKILDRMHRQKVAEVEKLTQTVRELEEAVLAGGAAANAVRDYQRKFQEMNEERKTLDRELARAKVTANRVATVVANEWKDGNDKVMPVKQWLEERRFLQGEMQQLRDKLAISDRAAKSEAQLKDKFQLRLRVLEETLRGTSSISIRNTPEGRSMSNGPSRRQSIGGSDNLQKFASNGFLSKKTPMRNSFTSNSTSVLKNAKGTSKSFDGGTRSLDRGKALLKGPGNYSFNKACDETKESESPNTWKEDSEEKPPSELPAPATEDNVPGVLYDLLQKEVVALRKSSHEKDQSLKDKDDAIEMLAKKVETLTKAMEVEAKKMRREVAAMEKEVAAMRVDKDQDNRAKRSSNTKPSSNTAQILAARAAGRSGLTRSTQ.

A disordered region spans residues 1-27 (MSDVSADGGFLSAEQATTPVAIPTPYP). A coiled-coil region spans residues 66-365 (DPVKVELNRL…LAISDRAAKS (300 aa)). The required for targeting to microtubules stretch occupies residues 250–483 (ILDRMHRQKV…YSFNKACDET (234 aa)). Disordered regions lie at residues 388 to 512 (SSIS…TEDN) and 579 to 622 (AAMR…RSTQ). Polar residues-rich tracts occupy residues 400-425 (SMSN…SNGF) and 432-453 (MRNS…TSKS). 2 stretches are compositionally biased toward basic and acidic residues: residues 479 to 501 (ACDE…EKPP) and 579 to 591 (AAMR…DNRA). A coiled-coil region spans residues 541 to 590 (DKDDAIEMLAKKVETLTKAMEVEAKKMRREVAAMEKEVAAMRVDKDQDNR). Over residues 594–605 (SSNTKPSSNTAQ) the composition is skewed to polar residues.

This sequence belongs to the MAP70 family. As to quaternary structure, interacts with MAP70.5 and itself.

It is found in the cytoplasm. Its subcellular location is the cytoskeleton. The protein localises to the phragmoplast. The protein resides in the spindle. Its function is as follows. Plant-specific protein that interact with microtubules. In association with MAP70.5, is essential for the normal banding pattern of secondary cell wall and for the proper development of xylem tracheary elements and wood formation. The polypeptide is Microtubule-associated protein 70-1 (MAP70.1) (Arabidopsis thaliana (Mouse-ear cress)).